The sequence spans 239 residues: Ribosomal RNA small subunit methyltransferase G (239 aa).

Residues Gly-77, Phe-82, 128–129, and Arg-146 contribute to the S-adenosyl-L-methionine site; that span reads AE. Residues 215 to 239 form a disordered region; the sequence is DKKRQTPKKYPRKPGTPNKTPLLEK.

This sequence belongs to the methyltransferase superfamily. RNA methyltransferase RsmG family.

It localises to the cytoplasm. Its function is as follows. Specifically methylates the N7 position of guanine in position 535 of 16S rRNA. The sequence is that of Ribosomal RNA small subunit methyltransferase G from Staphylococcus aureus (strain USA300).